A 419-amino-acid polypeptide reads, in one-letter code: Octopressin receptor (419 aa).

The Extracellular segment spans residues 1-37 (MENFTEENLHPWITTTTRVYNNVTIFPQYDDELGKFE). 2 N-linked (GlcNAc...) asparagine glycosylation sites follow: Asn3 and Asn22. The chain crosses the membrane as a helical span at residues 38–58 (IMVLCILCFMALFGNAVVLIV). Over 59–80 (LRIKKTTLTRMQLLIVYLSVTD) the chain is Cytoplasmic. A helical membrane pass occupies residues 81-101 (ISVALFHILPTIILKINVYFL). Residues 102–108 (GDISACR) lie on the Extracellular side of the membrane. An intrachain disulfide couples Cys107 to Cys182. Residues 109–129 (VYQFITVAELYASSFVLIVTA) form a helical membrane-spanning segment. The Cytoplasmic portion of the chain corresponds to 130–153 (LDRYISICHPLAAHMWTNRRVHMT). Residues 154-174 (TALALFLALMCSLPQLDAVLV) traverse the membrane as a helical segment. The Extracellular portion of the chain corresponds to 175–192 (DFHGGKLCRPNLTTELAN). N-linked (GlcNAc...) asparagine glycosylation occurs at Asn185. Residues 193 to 213 (IAYSWWAFCSVFFVPLLLLIF) form a helical membrane-spanning segment. Residues 214–292 (FYGRICFVVW…VSKSKIKTIK (79 aa)) lie on the Cytoplasmic side of the membrane. The tract at residues 253–274 (SQTSSENRVKNYSDARDKDSSR) is disordered. Residues 259–274 (NRVKNYSDARDKDSSR) show a composition bias toward basic and acidic residues. A helical transmembrane segment spans residues 293 to 313 (LTFSVVACFIICYTPFFTVLM). Topologically, residues 314 to 329 (ARTYDAELSSAQTPAL) are extracellular. The chain crosses the membrane as a helical span at residues 330–350 (VILSLLPSLNSCTNPWIYLAF). Over 351-419 (SGKVWCRQQS…TTALMSSSPC (69 aa)) the chain is Cytoplasmic.

Belongs to the G-protein coupled receptor 1 family. Vasopressin/oxytocin receptor subfamily. Present in the nervous system and peripheral tissues.

It localises to the cell membrane. In terms of biological role, acts as a receptor for octopressin. This is Octopressin receptor from Octopus vulgaris (Common octopus).